We begin with the raw amino-acid sequence, 101 residues long: MFVKKGDKVRVIAGKDKGTEAVVLKALPKVNKVVVEGVAIIKKHQKPSTENPQGAIVEKEAPIHASNVQVLDKNGVAGRVGYKVVDGKKVRYNKKSGEVLD.

Belongs to the universal ribosomal protein uL24 family. Part of the 50S ribosomal subunit.

Its function is as follows. One of two assembly initiator proteins, it binds directly to the 5'-end of the 23S rRNA, where it nucleates assembly of the 50S subunit. In terms of biological role, one of the proteins that surrounds the polypeptide exit tunnel on the outside of the subunit. The chain is Large ribosomal subunit protein uL24 from Streptococcus thermophilus (strain CNRZ 1066).